The sequence spans 109 residues: Small ribosomal subunit protein uS17 (109 aa).

This sequence belongs to the universal ribosomal protein uS17 family. As to quaternary structure, part of the 30S ribosomal subunit.

Functionally, one of the primary rRNA binding proteins, it binds specifically to the 5'-end of 16S ribosomal RNA. This chain is Small ribosomal subunit protein uS17, found in Thermoplasma volcanium (strain ATCC 51530 / DSM 4299 / JCM 9571 / NBRC 15438 / GSS1).